The chain runs to 445 residues: Phosphoglucosamine mutase (445 aa).

Catalysis depends on Ser99, which acts as the Phosphoserine intermediate. Mg(2+)-binding residues include Ser99, Asp242, Asp244, and Asp246. At Ser99 the chain carries Phosphoserine.

The protein belongs to the phosphohexose mutase family. It depends on Mg(2+) as a cofactor. In terms of processing, activated by phosphorylation.

The catalysed reaction is alpha-D-glucosamine 1-phosphate = D-glucosamine 6-phosphate. Catalyzes the conversion of glucosamine-6-phosphate to glucosamine-1-phosphate. The polypeptide is Phosphoglucosamine mutase (Campylobacter jejuni subsp. jejuni serotype O:6 (strain 81116 / NCTC 11828)).